Consider the following 209-residue polypeptide: Orotate phosphoribosyltransferase (209 aa).

Residues Arg-96, Lys-100, His-102, and 122–130 (EDLISTGGS) each bind 5-phospho-alpha-D-ribose 1-diphosphate. Ser-126 is a binding site for orotate.

It belongs to the purine/pyrimidine phosphoribosyltransferase family. PyrE subfamily. As to quaternary structure, homodimer. Requires Mg(2+) as cofactor.

It catalyses the reaction orotidine 5'-phosphate + diphosphate = orotate + 5-phospho-alpha-D-ribose 1-diphosphate. The protein operates within pyrimidine metabolism; UMP biosynthesis via de novo pathway; UMP from orotate: step 1/2. Its function is as follows. Catalyzes the transfer of a ribosyl phosphate group from 5-phosphoribose 1-diphosphate to orotate, leading to the formation of orotidine monophosphate (OMP). The sequence is that of Orotate phosphoribosyltransferase from Listeria monocytogenes serotype 4b (strain F2365).